Consider the following 316-residue polypeptide: Sulfate adenylyltransferase subunit 2 (316 aa).

Residues 297–316 (RAIDRDQSGSMEKKKREGYF) form a disordered region.

It belongs to the PAPS reductase family. CysD subfamily. Heterodimer composed of CysD, the smaller subunit, and CysN.

It catalyses the reaction sulfate + ATP + H(+) = adenosine 5'-phosphosulfate + diphosphate. It functions in the pathway sulfur metabolism; hydrogen sulfide biosynthesis; sulfite from sulfate: step 1/3. Functionally, with CysN forms the ATP sulfurylase (ATPS) that catalyzes the adenylation of sulfate producing adenosine 5'-phosphosulfate (APS) and diphosphate, the first enzymatic step in sulfur assimilation pathway. APS synthesis involves the formation of a high-energy phosphoric-sulfuric acid anhydride bond driven by GTP hydrolysis by CysN coupled to ATP hydrolysis by CysD. The sequence is that of Sulfate adenylyltransferase subunit 2 from Allorhizobium ampelinum (strain ATCC BAA-846 / DSM 112012 / S4) (Agrobacterium vitis (strain S4)).